Here is a 538-residue protein sequence, read N- to C-terminus: Putative outer membrane porin BglH (538 aa).

A signal peptide spans 1 to 25 (MFRRNLITSAILLMAPLAFSAQSLA). The tract at residues 52–82 (KDEEKKKYTPATVNRSVSTNDQGYAANPFPT) is disordered. The segment covering 62–73 (ATVNRSVSTNDQ) has biased composition (polar residues).

The protein belongs to the porin LamB (TC 1.B.3) family.

It is found in the cell outer membrane. Its function is as follows. May be a sugar porin with a broad carbohydrate specificity. In Shigella sonnei (strain Ss046), this protein is Putative outer membrane porin BglH (bglH).